The primary structure comprises 402 residues: Protein indeterminate-domain 12 (402 aa).

The interval 47-66 is disordered; the sequence is TETHKPKKKRGLPGNPDPDA. Ser-72 is subject to Phosphoserine. 2 C2H2-type zinc fingers span residues 82–104 and 124–154; these read FVCEICNKGFQRDQNLQLHRRGH and YVCPETNCAHHHPSRALGDLTGIKKHFCRKH. The short motif at 146–153 is the Nuclear localization signal element; that stretch reads IKKHFCRK. The C2H2-type 2; degenerate zinc-finger motif lies at 159–183; it reads WKCEKCSKFYAVQSDWKAHTKICGT. Positions 161, 164, 177, 181, 188, 190, 203, and 207 each coordinate Zn(2+). The CCHC-type 2; atypical zinc-finger motif lies at 186-209; the sequence is YRCDCGTLFSRKDTFITHRAFCDA. The segment at 196 to 208 is SHR-binding; sequence RKDTFITHRAFCD.

The protein localises to the nucleus. Probable transcription factor. The sequence is that of Protein indeterminate-domain 12 from Arabidopsis thaliana (Mouse-ear cress).